The chain runs to 145 residues: 3-dehydroquinate dehydratase (145 aa).

Tyrosine 24 functions as the Proton acceptor in the catalytic mechanism. Residues asparagine 75, histidine 81, and aspartate 88 each contribute to the substrate site. Residue histidine 101 is the Proton donor of the active site. Substrate contacts are provided by residues 102–103 (LS) and arginine 112.

The protein belongs to the type-II 3-dehydroquinase family. As to quaternary structure, homododecamer.

The catalysed reaction is 3-dehydroquinate = 3-dehydroshikimate + H2O. It functions in the pathway metabolic intermediate biosynthesis; chorismate biosynthesis; chorismate from D-erythrose 4-phosphate and phosphoenolpyruvate: step 3/7. Its function is as follows. Catalyzes a trans-dehydration via an enolate intermediate. The sequence is that of 3-dehydroquinate dehydratase from Phenylobacterium zucineum (strain HLK1).